A 294-amino-acid chain; its full sequence is NAD kinase (294 aa).

Asp74 acts as the Proton acceptor in catalysis. Residues 74–75 (DG), Lys79, 149–150 (NE), Asp179, 190–195 (TGYSLS), and Ala214 each bind NAD(+).

Belongs to the NAD kinase family. A divalent metal cation is required as a cofactor.

The protein localises to the cytoplasm. It carries out the reaction NAD(+) + ATP = ADP + NADP(+) + H(+). Its function is as follows. Involved in the regulation of the intracellular balance of NAD and NADP, and is a key enzyme in the biosynthesis of NADP. Catalyzes specifically the phosphorylation on 2'-hydroxyl of the adenosine moiety of NAD to yield NADP. The polypeptide is NAD kinase (Christiangramia forsetii (strain DSM 17595 / CGMCC 1.15422 / KT0803) (Gramella forsetii)).